The sequence spans 567 residues: Proline--tRNA ligase (567 aa).

This sequence belongs to the class-II aminoacyl-tRNA synthetase family. ProS type 1 subfamily. In terms of assembly, homodimer.

The protein resides in the cytoplasm. It carries out the reaction tRNA(Pro) + L-proline + ATP = L-prolyl-tRNA(Pro) + AMP + diphosphate. Catalyzes the attachment of proline to tRNA(Pro) in a two-step reaction: proline is first activated by ATP to form Pro-AMP and then transferred to the acceptor end of tRNA(Pro). As ProRS can inadvertently accommodate and process non-cognate amino acids such as alanine and cysteine, to avoid such errors it has two additional distinct editing activities against alanine. One activity is designated as 'pretransfer' editing and involves the tRNA(Pro)-independent hydrolysis of activated Ala-AMP. The other activity is designated 'posttransfer' editing and involves deacylation of mischarged Ala-tRNA(Pro). The misacylated Cys-tRNA(Pro) is not edited by ProRS. The sequence is that of Proline--tRNA ligase from Staphylococcus aureus (strain Mu3 / ATCC 700698).